We begin with the raw amino-acid sequence, 404 residues long: Diaminopropionate ammonia-lyase (404 aa).

K78 carries the N6-(pyridoxal phosphate)lysine modification.

Belongs to the diaminopropionate ammonia-lyase family. In terms of assembly, homodimer. Requires pyridoxal 5'-phosphate as cofactor.

It catalyses the reaction (S)-2,3-diaminopropanoate + H2O + H(+) = pyruvate + 2 NH4(+). The enzyme catalyses (R)-2,3-diaminopropanoate + H2O + H(+) = pyruvate + 2 NH4(+). Its activity is regulated as follows. Competitively inhibited by L- and D-alanine. Functionally, catalyzes the alpha,beta-elimination reaction of both L- and D-alpha,beta-diaminopropionate (DAP) to form pyruvate and ammonia. In vitro L- and D-isomers of serine are also degraded, though slowly; it is the only serine dehydratase which can eliminate an amino group at the beta-carbon position. In vivo L-, D- and a mixure of DL-DAP allow growth. DL-DAP is toxic in the absence of this enzyme, it may inhibit enzymes involved in the synthesis of pyruvate and aspartate, as well as amino acids derived from them. The protein is Diaminopropionate ammonia-lyase (dpaL) of Salmonella typhimurium (strain LT2 / SGSC1412 / ATCC 700720).